Consider the following 286-residue polypeptide: Polyamine aminopropyltransferase (286 aa).

Residues 1–235 (MSDYQETLYE…GAMTFAWGAT (235 aa)) form the PABS domain. Residue Gln-30 coordinates S-methyl-5'-thioadenosine. Positions 61 and 85 each coordinate spermidine. S-methyl-5'-thioadenosine is bound by residues Glu-105 and 137 to 138 (DG). The active-site Proton acceptor is Asp-155. Position 155 to 158 (155 to 158 (DSTD)) interacts with spermidine. Pro-162 serves as a coordination point for S-methyl-5'-thioadenosine.

This sequence belongs to the spermidine/spermine synthase family. As to quaternary structure, homodimer or homotetramer.

It localises to the cytoplasm. It catalyses the reaction S-adenosyl 3-(methylsulfanyl)propylamine + putrescine = S-methyl-5'-thioadenosine + spermidine + H(+). It functions in the pathway amine and polyamine biosynthesis; spermidine biosynthesis; spermidine from putrescine: step 1/1. Functionally, catalyzes the irreversible transfer of a propylamine group from the amino donor S-adenosylmethioninamine (decarboxy-AdoMet) to putrescine (1,4-diaminobutane) to yield spermidine. This Pseudomonas syringae pv. tomato (strain ATCC BAA-871 / DC3000) protein is Polyamine aminopropyltransferase.